A 160-amino-acid polypeptide reads, in one-letter code: MGLLGFGGAAAEAAQVATHHTTVLLDHHAGACEAVARAAEKAAEEVAAIKMRLQVIRDAAREHHLTIAYATGTALPPPDLSSYSPADQQAILNTAIRRASNVCWPTPRPPMRIWPRRFDAPPGPCRASRSMPNSAMRHPQCRRCRRRTATLRRSSGGGIR.

This is an uncharacterized protein from Mycobacterium tuberculosis (strain ATCC 25618 / H37Rv).